A 339-amino-acid polypeptide reads, in one-letter code: Putative zinc metalloprotease FN1322 (339 aa).

His17 contacts Zn(2+). Glu18 is a catalytic residue. His21 lines the Zn(2+) pocket. A run of 3 helical transmembrane segments spans residues 88-110 (FIVL…FVTA), 262-284 (FGWI…LNLL), and 318-335 (GMIL…NDVW). The region spanning 96–179 (FMNFLMAFIL…ITALVERNGK (84 aa)) is the PDZ domain.

It belongs to the peptidase M50B family. Zn(2+) is required as a cofactor.

Its subcellular location is the cell membrane. The chain is Putative zinc metalloprotease FN1322 from Fusobacterium nucleatum subsp. nucleatum (strain ATCC 25586 / DSM 15643 / BCRC 10681 / CIP 101130 / JCM 8532 / KCTC 2640 / LMG 13131 / VPI 4355).